The primary structure comprises 298 residues: Syntaxin-125 (298 aa).

Met1 carries the N-acetylmethionine modification. Residues 1-274 (MNDLFSNSFK…KSSRKWTCYA (274 aa)) are Cytoplasmic-facing. A coiled-coil region spans residues 25–155 (TMNLDKFFED…NEYKETVERR (131 aa)). One can recognise a t-SNARE coiled-coil homology domain in the interval 198–260 (ISEIQERHDA…RRGTDQLQDA (63 aa)). Residues 275-295 (IILFIVIFILLLIPLLPHIML) form a helical; Anchor for type IV membrane protein membrane-spanning segment. Residues 296-298 (MLK) are Vesicular-facing.

This sequence belongs to the syntaxin family. In terms of assembly, part of the t-SNARE complex.

It is found in the membrane. Functionally, vesicle trafficking protein that functions in the secretory pathway. This is Syntaxin-125 (SYP125) from Arabidopsis thaliana (Mouse-ear cress).